A 183-amino-acid chain; its full sequence is Bifunctional protein PyrR (183 aa).

The PRPP-binding motif lies at 100–112 (VILVDDVLYTGRT).

The protein belongs to the purine/pyrimidine phosphoribosyltransferase family. PyrR subfamily.

It catalyses the reaction UMP + diphosphate = 5-phospho-alpha-D-ribose 1-diphosphate + uracil. In terms of biological role, regulates the transcription of the pyrimidine nucleotide (pyr) operon in response to exogenous pyrimidines. Its function is as follows. Also displays a weak uracil phosphoribosyltransferase activity which is not physiologically significant. This is Bifunctional protein PyrR from Deinococcus deserti (strain DSM 17065 / CIP 109153 / LMG 22923 / VCD115).